The following is a 539-amino-acid chain: Glycerol kinase (539 aa).

An ADP-binding site is contributed by T49. Positions 49, 50, and 51 each coordinate ATP. T49 contacts sn-glycerol 3-phosphate. Residue R53 coordinates ADP. Residues R119, E120, Y171, and D280 each contribute to the sn-glycerol 3-phosphate site. R119, E120, Y171, D280, and Q281 together coordinate glycerol. ADP contacts are provided by T302 and G345. ATP contacts are provided by T302, G345, Q349, and G446. Residues G446 and N450 each coordinate ADP.

The protein belongs to the FGGY kinase family.

It carries out the reaction glycerol + ATP = sn-glycerol 3-phosphate + ADP + H(+). Its pathway is polyol metabolism; glycerol degradation via glycerol kinase pathway; sn-glycerol 3-phosphate from glycerol: step 1/1. Its activity is regulated as follows. Inhibited by fructose 1,6-bisphosphate (FBP). In terms of biological role, key enzyme in the regulation of glycerol uptake and metabolism. Catalyzes the phosphorylation of glycerol to yield sn-glycerol 3-phosphate. This is Glycerol kinase from Rhodopirellula baltica (strain DSM 10527 / NCIMB 13988 / SH1).